Reading from the N-terminus, the 148-residue chain is Large ribosomal subunit protein bL27m (148 aa).

Residues 1 to 30 (MALAVLAWRTRTAVIALLSPPQAAALAVRY) constitute a mitochondrion transit peptide.

Belongs to the bacterial ribosomal protein bL27 family. As to quaternary structure, component of the mitochondrial ribosome large subunit (39S) which comprises a 16S rRNA and about 50 distinct proteins.

The protein resides in the mitochondrion. The chain is Large ribosomal subunit protein bL27m (MRPL27) from Bos taurus (Bovine).